The sequence spans 301 residues: Cell division protein kinase 2 homolog CRK1 (301 aa).

The Protein kinase domain maps to 5–297; the sequence is YERQEKIGEG…AADALNHPYF (293 aa). ATP-binding positions include 11 to 19 and Lys34; that span reads IGEGTYGVV. Asp127 acts as the Proton acceptor in catalysis. Residue Thr160 is modified to Phosphothreonine; by CAK.

It belongs to the protein kinase superfamily. CMGC Ser/Thr protein kinase family. CDC2/CDKX subfamily. Forms a stable but non-covalent complex with a regulatory subunit and with a cyclin.

It catalyses the reaction [DNA-directed RNA polymerase] + ATP = phospho-[DNA-directed RNA polymerase] + ADP + H(+). Phosphorylation at Thr-15 or Tyr-16 inactivates the enzyme, while phosphorylation at Thr-160 activates it. May be involved in some stage-specific role in the promastigote cell cycle. The polypeptide is Cell division protein kinase 2 homolog CRK1 (CRK1) (Leishmania mexicana).